Consider the following 165-residue polypeptide: 2-halobenzoate 1,2-dioxygenase small subunit (165 aa).

Belongs to the bacterial ring-hydroxylating dioxygenase beta subunit family. As to quaternary structure, heterohexamer of 3 large (CbdA) subunits and 3 small (CbdB) subunits. The heterohexamer is part of 2-halobenzoate dioxygenase two component enzyme system. The other component is a NADH:acceptor reductase (CdbC).

It carries out the reaction a 2-halobenzoate + NADH + O2 + H(+) = a halide anion + catechol + CO2 + NAD(+). The protein operates within xenobiotic degradation; benzoate degradation via CoA ligation. Functionally, component of 2-halobenzoate dioxygenase multicomponent enzyme system which catalyzes the incorporation of both atoms of molecular oxygen into 2-halobenzoate to form catechol. This is 2-halobenzoate 1,2-dioxygenase small subunit (cbdB) from Burkholderia cepacia (Pseudomonas cepacia).